The chain runs to 1173 residues: Clustered mitochondria protein homolog (1173 aa).

Residues 1 to 21 are compositionally biased toward low complexity; that stretch reads MSTIDLPTSSLPGSSGDPSGT. The tract at residues 1–25 is disordered; it reads MSTIDLPTSSLPGSSGDPSGTEMSH. The region spanning 316–565 is the Clu domain; it reads VPHRADLSRT…SLFPLDAQFL (250 aa). The disordered stretch occupies residues 888-910; it reads KFTGKKGNKKKRNLGKSQNTTNR. Residues 890-901 are compositionally biased toward basic residues; sequence TGKKGNKKKRNL. One copy of the TPR repeat lies at 984 to 1017; it reads ARAYCQLAMIYHQLEKKEEAVELARKAVIVCERF.

This sequence belongs to the CLU family. As to quaternary structure, may associate with the eukaryotic translation initiation factor 3 (eIF-3) complex.

The protein localises to the cytoplasm. Its function is as follows. mRNA-binding protein involved in proper cytoplasmic distribution of mitochondria. This chain is Clustered mitochondria protein homolog, found in Schizosaccharomyces pombe (strain 972 / ATCC 24843) (Fission yeast).